The sequence spans 147 residues: Hemoglobin subunit beta (147 aa).

At V2 the chain carries N-acetylvaline. Residues 3–147 form the Globin domain; sequence HLTAEEKSAV…VANALAHKYH (145 aa). A Phosphothreonine modification is found at T13. S45 is modified (phosphoserine). An N6-acetyllysine modification is found at K60. A heme b-binding site is contributed by H64. Position 83 is an N6-acetyllysine (K83). H93 provides a ligand contact to heme b. At C94 the chain carries S-nitrosocysteine. N6-acetyllysine is present on K145.

This sequence belongs to the globin family. Heterotetramer of two alpha chains and two beta chains. Red blood cells.

Involved in oxygen transport from the lung to the various peripheral tissues. The protein is Hemoglobin subunit beta (HBB) of Sapajus apella (Brown-capped capuchin).